A 192-amino-acid chain; its full sequence is MTKSVRLEEGDASKVLVPVGSNKGVSVMDLVLRLVGIAGTLGAAIAMGTNEQTLPFFTRFVVFNAEYDDFRSFRLFVIVNAIVCAYFVLTLPLSIVHIMRSAARGSRILLIIMDTVMLALLTAGASAAASIVYLAHNGNTSTNWLPVCQQYGDFCQGASGSLIGSFGAVVVFILIILLGAIALSRHAKRVVL.

Over 1–26 (MTKSVRLEEGDASKVLVPVGSNKGVS) the chain is Cytoplasmic. Residues 27–47 (VMDLVLRLVGIAGTLGAAIAM) traverse the membrane as a helical segment. At 48–75 (GTNEQTLPFFTRFVVFNAEYDDFRSFRL) the chain is on the extracellular side. Residues 76–96 (FVIVNAIVCAYFVLTLPLSIV) form a helical membrane-spanning segment. At 97–107 (HIMRSAARGSR) the chain is on the cytoplasmic side. Residues 108–128 (ILLIIMDTVMLALLTAGASAA) form a helical membrane-spanning segment. The Extracellular segment spans residues 129–161 (ASIVYLAHNGNTSTNWLPVCQQYGDFCQGASGS). Residue asparagine 139 is glycosylated (N-linked (GlcNAc...) asparagine). The helical transmembrane segment at 162–182 (LIGSFGAVVVFILIILLGAIA) threads the bilayer. Residues 183-192 (LSRHAKRVVL) lie on the Cytoplasmic side of the membrane.

The protein belongs to the Casparian strip membrane proteins (CASP) family. As to quaternary structure, homodimer and heterodimers.

The protein resides in the cell membrane. Regulates membrane-cell wall junctions and localized cell wall deposition. Required for establishment of the Casparian strip membrane domain (CSD) and the subsequent formation of Casparian strips, a cell wall modification of the root endodermis that determines an apoplastic barrier between the intraorganismal apoplasm and the extraorganismal apoplasm and prevents lateral diffusion. In Lactuca saligna (Willowleaf lettuce), this protein is Casparian strip membrane protein 1.